Reading from the N-terminus, the 853-residue chain is DNA topoisomerase 1 (853 aa).

In terms of domain architecture, Toprim spans 3–136 (KSLVIVESPV…KFRRVVFNEI (134 aa)). Mg(2+) contacts are provided by E9 and D105. Residues 152-565 (NMNRVYSQQA…SFFDNFSQQL (414 aa)) enclose the Topo IA-type catalytic domain. Positions 186–191 (SAGRVQ) are interaction with DNA. Y313 functions as the O-(5'-phospho-DNA)-tyrosine intermediate in the catalytic mechanism. 3 consecutive C4-type zinc fingers follow at residues 589-621 (CSLC…EKRC), 649-676 (CKKC…NPSC), and 699-724 (CEKC…NDTC).

The protein belongs to the type IA topoisomerase family. In terms of assembly, monomer. Mg(2+) is required as a cofactor.

The catalysed reaction is ATP-independent breakage of single-stranded DNA, followed by passage and rejoining.. Functionally, releases the supercoiling and torsional tension of DNA, which is introduced during the DNA replication and transcription, by transiently cleaving and rejoining one strand of the DNA duplex. Introduces a single-strand break via transesterification at a target site in duplex DNA. The scissile phosphodiester is attacked by the catalytic tyrosine of the enzyme, resulting in the formation of a DNA-(5'-phosphotyrosyl)-enzyme intermediate and the expulsion of a 3'-OH DNA strand. The free DNA strand then undergoes passage around the unbroken strand, thus removing DNA supercoils. Finally, in the religation step, the DNA 3'-OH attacks the covalent intermediate to expel the active-site tyrosine and restore the DNA phosphodiester backbone. The polypeptide is DNA topoisomerase 1 (Buchnera aphidicola subsp. Schizaphis graminum (strain Sg)).